A 652-amino-acid chain; its full sequence is Proline-rich receptor-like protein kinase PERK1 (652 aa).

A disordered region spans residues 1–137; it reads MSTAPSPGTT…PPSDSSDGLS (137 aa). Over 1–139 the chain is Extracellular; it reads MSTAPSPGTT…SDSSDGLSTG (139 aa). Positions 8–19 are enriched in pro residues; sequence GTTPSPSPPSPP. Residues asparagine 21 and asparagine 50 are each glycosylated (N-linked (GlcNAc...) asparagine). Pro residues predominate over residues 26–112; that stretch reads TPPPAASSPP…PSPNQGPPNT (87 aa). Low complexity predominate over residues 113 to 137; the sequence is PSGSTPRTPSNTKPSPPSDSSDGLS. A helical membrane pass occupies residues 140–160; sequence VVVGIAIGGVAILVILTLICL. Residues 161-652 lie on the Cytoplasmic side of the membrane; that stretch reads LCKKKRRRRH…TGQGYSGPSL (492 aa). The interval 169 to 251 is disordered; that stretch reads RHDDEAAYYV…GGSDYSDLPV (83 aa). A compositionally biased stretch (polar residues) spans 203–213; the sequence is NASRPSDNHVV. The segment covering 216–236 has biased composition (pro residues); it reads LPPPKPPSPPRKPPPPPPPPA. Threonine 269 carries the phosphothreonine modification. The region spanning 280-559 is the Protein kinase domain; that stretch reads FSEANLLGQG…VRALEGNVSL (280 aa). Residues 286-294 and lysine 308 each bind ATP; that span reads LGQGGFGYV. Position 353 is a phosphotyrosine (tyrosine 353). Residue aspartate 404 is the Proton acceptor of the active site. 2 positions are modified to phosphoserine: serine 408 and serine 437. Residues threonine 438 and threonine 443 each carry the phosphothreonine modification. Position 451 is a phosphotyrosine (tyrosine 451). The span at 605–616 shows a compositional bias: polar residues; sequence YGTTGEYSNPTS. A disordered region spans residues 605-652; sequence YGTTGEYSNPTSDYGLYPSGSSSEGQATREMEMGKIKKTGQGYSGPSL.

Belongs to the protein kinase superfamily. Ser/Thr protein kinase family. Mostly expressed in inflorescence bolt, flower buds and siliques, and, to a lower extent, in roots, seedlings and leaves.

The protein localises to the cell membrane. The enzyme catalyses L-seryl-[protein] + ATP = O-phospho-L-seryl-[protein] + ADP + H(+). The catalysed reaction is L-threonyl-[protein] + ATP = O-phospho-L-threonyl-[protein] + ADP + H(+). The chain is Proline-rich receptor-like protein kinase PERK1 (PERK1) from Arabidopsis thaliana (Mouse-ear cress).